The primary structure comprises 525 residues: Phospho-2-dehydro-3-deoxyheptonate aldolase 1, chloroplastic (525 aa).

Positions 1–13 are enriched in polar residues; the sequence is MALSNASSLSTRS. The segment at 1–35 is disordered; that stretch reads MALSNASSLSTRSIYGGDLSHRPSNRQSSFTFHPA. Residues 1–52 constitute a chloroplast transit peptide; it reads MALSNASSLSTRSIYGGDLSHRPSNRQSSFTFHPAVNTKPKSVNLVTAVHAA.

This sequence belongs to the class-II DAHP synthase family.

It is found in the plastid. The protein resides in the chloroplast. It carries out the reaction D-erythrose 4-phosphate + phosphoenolpyruvate + H2O = 7-phospho-2-dehydro-3-deoxy-D-arabino-heptonate + phosphate. The protein operates within metabolic intermediate biosynthesis; chorismate biosynthesis; chorismate from D-erythrose 4-phosphate and phosphoenolpyruvate: step 1/7. The polypeptide is Phospho-2-dehydro-3-deoxyheptonate aldolase 1, chloroplastic (DHS1) (Arabidopsis thaliana (Mouse-ear cress)).